Consider the following 376-residue polypeptide: Succinyl-diaminopimelate desuccinylase 1 (376 aa).

His-67 is a Zn(2+) binding site. The active site involves Asp-69. A Zn(2+)-binding site is contributed by Asp-100. Catalysis depends on Glu-134, which acts as the Proton acceptor. Residues Glu-135, Glu-163, and His-349 each coordinate Zn(2+).

This sequence belongs to the peptidase M20A family. DapE subfamily. In terms of assembly, homodimer. It depends on Zn(2+) as a cofactor. Co(2+) serves as cofactor.

The enzyme catalyses N-succinyl-(2S,6S)-2,6-diaminopimelate + H2O = (2S,6S)-2,6-diaminopimelate + succinate. Its pathway is amino-acid biosynthesis; L-lysine biosynthesis via DAP pathway; LL-2,6-diaminopimelate from (S)-tetrahydrodipicolinate (succinylase route): step 3/3. In terms of biological role, catalyzes the hydrolysis of N-succinyl-L,L-diaminopimelic acid (SDAP), forming succinate and LL-2,6-diaminopimelate (DAP), an intermediate involved in the bacterial biosynthesis of lysine and meso-diaminopimelic acid, an essential component of bacterial cell walls. The polypeptide is Succinyl-diaminopimelate desuccinylase 1 (Shewanella loihica (strain ATCC BAA-1088 / PV-4)).